Here is a 586-residue protein sequence, read N- to C-terminus: Kelch-like protein 7 (586 aa).

The BTB domain maps to 44-111 (CDVILMVQER…AYTARISVNS (68 aa)). Positions 146 to 248 (CLGISVLAEC…SKNFLSKTVQ (103 aa)) constitute a BACK domain. 6 Kelch repeats span residues 294–336 (RIAL…FWDN), 337–382 (VVYI…AAEG), 383–430 (KIYT…EANG), 431–481 (LIYV…FVKD), 483–528 (IFAV…AVGS), and 530–575 (VYVL…CVVD).

In terms of assembly, homodimer. Component of the BCR(KLHL7) E3 ubiquitin ligase complex, at least composed of CUL3 and KLHL7 and RBX1. In terms of tissue distribution, widely expressed, with highest levels in adult and fetal heart, CNS and adult testis.

It is found in the nucleus. Its subcellular location is the cytoplasm. The protein operates within protein modification; protein ubiquitination. Substrate-specific adapter of a BCR (BTB-CUL3-RBX1) E3 ubiquitin ligase complex. The BCR(KLHL7) complex acts by mediating ubiquitination and subsequent degradation of substrate proteins. Probably mediates 'Lys-48'-linked ubiquitination. The protein is Kelch-like protein 7 (KLHL7) of Homo sapiens (Human).